Here is a 469-residue protein sequence, read N- to C-terminus: Regulator of G-protein signaling 7 (469 aa).

Residues 37–112 form the DEP domain; sequence EKNGIPIRTV…DDGTFYRFQT (76 aa). Ser-229 and Ser-241 each carry phosphoserine. Positions 236 to 255 are disordered; sequence DIRSHSPTHTPTPETKPPTE. Thr-243 is subject to Phosphothreonine. The 62-residue stretch at 255-316 folds into the G protein gamma domain; it reads EDELHQQIKY…LSDDTTFWEL (62 aa). An RGS domain is found at 333–448; it reads GMDEALKDPV…IRSSAYQELL (116 aa). Ser-434 is subject to Phosphoserine.

Interacts with GNB5, forming the RGS7-GNB5 complex. Interacts with GPR158; promotes the GTPase activator activity of the RGS7-GNB5 complex in absence of glycine, in contrast GTPase activator activity of the RGS7-GNB5 complex is inhibited in presence of glycine. Interacts with GPR179. Interacts with PKD1; this prevents rapid proteasomal degradation. Interacts with RGS7BP, leading to regulate the subcellular location of the heterodimer formed with GNB5. Interacts (phosphorylated form) with 14-3-3 protein YWHAQ. Interacts with SNAPIN. Interacts with GNAI1. Interacts with GNAO1, GNAI3 and GNAZ. Palmitoylated. Post-translationally, ubiquitinated, leading to rapid proteasomal degradation. In terms of processing, phosphorylation and subsequent interaction with 14-3-3 proteins inhibits GAP activity. In terms of tissue distribution, detected in brain (at protein level).

It localises to the cytoplasm. It is found in the cytosol. The protein resides in the cell membrane. The protein localises to the membrane. Functionally, GTPase activator component of the RGS7-GNB5 complex that regulates G protein-coupled receptor signaling cascades. The RGS7-GNB5 complex acts as an inhibitor signal transduction by promoting the GTPase activity of G protein alpha subunits, such as GNAO1, thereby driving them into their inactive GDP-bound form. May play a role in synaptic vesicle exocytosis. Glycine-dependent regulation of the RGS7-GNB5 complex by GPR158 affects mood and cognition via its ability to regulate neuronal excitability in L2/L3 pyramidal neurons of the prefrontal cortex. Modulates the activity of potassium channels that are activated by GNAO1 in response to muscarinic acetylcholine receptor M2/CHRM2 signaling. The protein is Regulator of G-protein signaling 7 (Rgs7) of Mus musculus (Mouse).